The primary structure comprises 549 residues: Glucose-6-phosphate isomerase (549 aa).

An N6-acetyllysine mark is found at Lys80, Lys228, and Lys234. Glu355 functions as the Proton donor in the catalytic mechanism. Active-site residues include His386 and Lys514.

The protein belongs to the GPI family.

The protein localises to the cytoplasm. It carries out the reaction alpha-D-glucose 6-phosphate = beta-D-fructose 6-phosphate. It participates in carbohydrate biosynthesis; gluconeogenesis. It functions in the pathway carbohydrate degradation; glycolysis; D-glyceraldehyde 3-phosphate and glycerone phosphate from D-glucose: step 2/4. Its function is as follows. Catalyzes the reversible isomerization of glucose-6-phosphate to fructose-6-phosphate. In Escherichia coli (strain SMS-3-5 / SECEC), this protein is Glucose-6-phosphate isomerase.